The primary structure comprises 1025 residues: Putative receptor-like protein kinase At3g47110 (1025 aa).

The first 30 residues, 1–30 (MGVPCIVMRLILVSALLVSVSLEHSDMVCA), serve as a signal peptide directing secretion. Residues 31–653 (QTIRLTEETD…LPRRHSSVRK (623 aa)) are Extracellular-facing. Asparagine 63 and asparagine 103 each carry an N-linked (GlcNAc...) asparagine glycan. 10 LRR repeats span residues 104 to 128 (LSFL…VGNL), 130 to 151 (RLQY…VLSN), 152 to 175 (CSSL…EFGS), 176 to 200 (LSKL…LGNL), 202 to 224 (SLQM…IARL), 226 to 248 (QMIF…IYNL), 249 to 271 (SSLI…DFGS), 273 to 297 (LPNL…LSNI), 298 to 323 (SSLR…RLQN), and 325 to 344 (LLLG…DLDF). N-linked (GlcNAc...) asparagine glycosylation is found at asparagine 135 and asparagine 151. N-linked (GlcNAc...) asparagine glycosylation is found at asparagine 188 and asparagine 199. N-linked (GlcNAc...) asparagine glycosylation is present at asparagine 247. Asparagine 296 carries N-linked (GlcNAc...) asparagine glycosylation. 4 N-linked (GlcNAc...) asparagine glycosylation sites follow: asparagine 331, asparagine 336, asparagine 350, and asparagine 374. LRR repeat units lie at residues 351-374 (CSQL…FIAN), 376-400 (STQL…IGNL), 401-424 (VSLQ…LGEL), 426-448 (ELRK…LGNI), 449-472 (SGLT…LGSC), 473-496 (SYLL…LMEL), 498-520 (SLVV…IGKL), 521-544 (KFLL…LANC), 546-567 (SLEF…IRGL), 568-593 (TGLR…NFSK), and 595-616 (QNLN…VFRN). N-linked (GlcNAc...) asparagine glycosylation is found at asparagine 447, asparagine 458, asparagine 486, and asparagine 503. N-linked (GlcNAc...) asparagine glycosylation is found at asparagine 579, asparagine 590, asparagine 598, and asparagine 616. Residues 654 to 674 (IITICVSAVMAALLLLCLCVV) form a helical membrane-spanning segment. At 675–1025 (YLCWYKLRVK…RESFFRDEET (351 aa)) the chain is on the cytoplasmic side. At threonine 716 the chain carries Phosphothreonine. In terms of domain architecture, Protein kinase spans 719 to 1020 (FSSSNLIGSG…KLVSIRESFF (302 aa)). ATP contacts are provided by residues 725-733 (IGSGNFGAV) and lysine 748. A phosphotyrosine mark is found at tyrosine 798 and tyrosine 843. Catalysis depends on aspartate 856, which acts as the Proton acceptor. Tyrosine 904 carries the phosphotyrosine modification.

The protein belongs to the protein kinase superfamily. Ser/Thr protein kinase family.

It localises to the cell membrane. It catalyses the reaction L-seryl-[protein] + ATP = O-phospho-L-seryl-[protein] + ADP + H(+). The enzyme catalyses L-threonyl-[protein] + ATP = O-phospho-L-threonyl-[protein] + ADP + H(+). The protein is Putative receptor-like protein kinase At3g47110 of Arabidopsis thaliana (Mouse-ear cress).